Consider the following 642-residue polypeptide: Threonine--tRNA ligase (642 aa).

Residues 1 to 61 form the TGS domain; sequence MPIITLPDGS…EEDASLEIIT (61 aa). Residues 244–535 are catalytic; the sequence is DHRKIGKQLD…LIEEYAGFFP (292 aa). Zn(2+)-binding residues include Cys335, His386, and His512.

It belongs to the class-II aminoacyl-tRNA synthetase family. Homodimer. Zn(2+) serves as cofactor.

Its subcellular location is the cytoplasm. The enzyme catalyses tRNA(Thr) + L-threonine + ATP = L-threonyl-tRNA(Thr) + AMP + diphosphate + H(+). Catalyzes the attachment of threonine to tRNA(Thr) in a two-step reaction: L-threonine is first activated by ATP to form Thr-AMP and then transferred to the acceptor end of tRNA(Thr). Also edits incorrectly charged L-seryl-tRNA(Thr). The chain is Threonine--tRNA ligase from Vibrio vulnificus (strain YJ016).